We begin with the raw amino-acid sequence, 426 residues long: Isocitrate dehydrogenase [NADP] (426 aa).

D-threo-isocitrate is bound by residues Ser-123, Asn-125, Arg-129, Arg-139, and Arg-162. Asp-312 is a binding site for Mg(2+). Residues 344-350 (HGTAWDI), Asn-357, and Lys-404 contribute to the NADP(+) site.

Belongs to the isocitrate and isopropylmalate dehydrogenases family. As to quaternary structure, homodimer. Mg(2+) is required as a cofactor. Mn(2+) serves as cofactor.

The enzyme catalyses D-threo-isocitrate + NADP(+) = 2-oxoglutarate + CO2 + NADPH. Its function is as follows. Catalyzes the oxidative decarboxylation of isocitrate to 2-oxoglutarate and carbon dioxide with the concomitant reduction of NADP(+). This Aquifex aeolicus (strain VF5) protein is Isocitrate dehydrogenase [NADP] (icd).